A 231-amino-acid chain; its full sequence is dTTP/UTP pyrophosphatase (231 aa).

D81 serves as the catalytic Proton acceptor.

The protein belongs to the Maf family. YhdE subfamily. The cofactor is a divalent metal cation.

The protein localises to the cytoplasm. It catalyses the reaction dTTP + H2O = dTMP + diphosphate + H(+). The enzyme catalyses UTP + H2O = UMP + diphosphate + H(+). In terms of biological role, nucleoside triphosphate pyrophosphatase that hydrolyzes dTTP and UTP. May have a dual role in cell division arrest and in preventing the incorporation of modified nucleotides into cellular nucleic acids. The chain is dTTP/UTP pyrophosphatase from Lawsonia intracellularis (strain PHE/MN1-00).